The sequence spans 238 residues: Orotidine 5'-phosphate decarboxylase (238 aa).

Residues D10, K32, 59–68 (DLKLHDIPNT), T122, R184, Q193, G213, and R214 contribute to the substrate site. K61 acts as the Proton donor in catalysis.

This sequence belongs to the OMP decarboxylase family. Type 1 subfamily. In terms of assembly, homodimer.

The catalysed reaction is orotidine 5'-phosphate + H(+) = UMP + CO2. Its pathway is pyrimidine metabolism; UMP biosynthesis via de novo pathway; UMP from orotate: step 2/2. In terms of biological role, catalyzes the decarboxylation of orotidine 5'-monophosphate (OMP) to uridine 5'-monophosphate (UMP). The sequence is that of Orotidine 5'-phosphate decarboxylase from Bacillus cereus (strain ZK / E33L).